The sequence spans 205 residues: Probable thymidylate kinase (205 aa).

ATP is bound at residue 10 to 17; the sequence is GIDGSGKT.

This sequence belongs to the thymidylate kinase family.

It catalyses the reaction dTMP + ATP = dTDP + ADP. In Pyrococcus horikoshii (strain ATCC 700860 / DSM 12428 / JCM 9974 / NBRC 100139 / OT-3), this protein is Probable thymidylate kinase (tmk).